A 179-amino-acid polypeptide reads, in one-letter code: uncharacterized protein (179 aa).

Residues 1-15 are compositionally biased toward basic and acidic residues; sequence MQRQTGHMEDKKRTG. The segment at 1-32 is disordered; it reads MQRQTGHMEDKKRTGLESQGTENAFSDGRDGK.

This is an uncharacterized protein from Gallus gallus (Chicken).